The chain runs to 433 residues: N-lysine methyltransferase SMYD2 (433 aa).

The 235-residue stretch at 7 to 241 folds into the SET domain; it reads GGLERFCSPG…PGEEVFTSYI (235 aa). 17 to 19 is an S-adenosyl-L-methionine binding site; that stretch reads KGR. Positions 52, 55, 65, 68, 74, 78, 86, and 90 each coordinate Zn(2+). The MYND-type zinc-finger motif lies at 52–90; sequence CEFCFARKEGLSKCGRCKQAFYCNVECQREDWPMHKLEC. S-adenosyl-L-methionine-binding positions include H137, 206-207, and 258-260; these read NH and YFF.

It belongs to the class V-like SAM-binding methyltransferase superfamily. In terms of assembly, interacts with RNA polymerase II and HELZ. Interacts with SIN3A and HDAC1. Interacts (via MYND-type zinc finger) with EPB41L3. Interacts (via SET domain) with p53/TP53. Interacts with RB1 and HSP90AA1.

It localises to the cytoplasm. The protein resides in the cytosol. Its subcellular location is the nucleus. The enzyme catalyses L-lysyl(4)-[histone H3] + 3 S-adenosyl-L-methionine = N(6),N(6),N(6)-trimethyl-L-lysyl(4)-[histone H3] + 3 S-adenosyl-L-homocysteine + 3 H(+). The catalysed reaction is L-lysyl-[protein] + S-adenosyl-L-methionine = N(6)-methyl-L-lysyl-[protein] + S-adenosyl-L-homocysteine + H(+). In terms of biological role, protein-lysine N-methyltransferase that methylates both histones and non-histone proteins, including p53/TP53 and RB1. Specifically trimethylates histone H3 'Lys-4' (H3K4me3) in vivo. The activity requires interaction with HSP90alpha. Shows even higher methyltransferase activity on p53/TP53. Monomethylates 'Lys-370' of p53/TP53, leading to decreased DNA-binding activity and subsequent transcriptional regulation activity of p53/TP53. Monomethylates RB1 at 'Lys-860'. This is N-lysine methyltransferase SMYD2 (SMYD2) from Bos taurus (Bovine).